We begin with the raw amino-acid sequence, 102 residues long: Thioredoxin (102 aa).

One can recognise a Thioredoxin domain in the interval 1–102 (MVKVVSAENF…SLIRLINQHS (102 aa)). Cys-28 and Cys-31 are disulfide-bonded.

The protein belongs to the thioredoxin family.

In terms of biological role, participates in various redox reactions through the reversible oxidation of its active center dithiol to a disulfide and catalyzes dithiol-disulfide exchange reactions. The sequence is that of Thioredoxin (trxA) from Chlamydia caviae (strain ATCC VR-813 / DSM 19441 / 03DC25 / GPIC) (Chlamydophila caviae).